We begin with the raw amino-acid sequence, 1766 residues long: Putative ATP-dependent RNA helicase R366 (1766 aa).

The disordered stretch occupies residues 209–239 (KSSSNQNSNQSNQESNESNQEPNESNQEINQ). Over residues 210 to 239 (SSSNQNSNQSNQESNESNQEPNESNQEINQ) the composition is skewed to low complexity. One can recognise a Helicase ATP-binding domain in the interval 656–865 (YHHYSNNRVL…RYYRRINDNR (210 aa)). An ATP-binding site is contributed by 669-676 (GATGVGKS). The short motif at 812 to 815 (DEAH) is the DEAH box element. A Helicase C-terminal domain is found at 947–1116 (DIHKSIKAIN…TMVKLIKSYP (170 aa)).

It belongs to the DEAD box helicase family. DEAH subfamily.

The enzyme catalyses ATP + H2O = ADP + phosphate + H(+). The sequence is that of Putative ATP-dependent RNA helicase R366 from Acanthamoeba polyphaga mimivirus (APMV).